Reading from the N-terminus, the 359-residue chain is C-X-C chemokine receptor type 2 (359 aa).

Topologically, residues 1-47 (MGEFKVDKFNIEDFFSGDLDIFNYSSGMPSILPDAVPCHSENLEINS) are extracellular. N-linked (GlcNAc...) asparagine glycosylation is present at Asn23. The helical transmembrane segment at 48-74 (YAVVVIYVLVTLLSLVGNSLVMLVILY) threads the bilayer. At 75-83 (NRSTCSVTD) the chain is on the cytoplasmic side. A helical membrane pass occupies residues 84 to 104 (VYLLNLAIADLFFALTLPVWA). Topologically, residues 105–119 (ASKVNGWTFGSTLCK) are extracellular. A disulfide bond links Cys118 and Cys195. Residues 120–141 (IFSYVKEVTFYSSVLLLACISM) form a helical membrane-spanning segment. Topologically, residues 142–162 (DRYLAIVHATSTLIQKRHLVK) are cytoplasmic. A helical membrane pass occupies residues 163–182 (FVCIAMWLLSVILALPILIL). The Extracellular portion of the chain corresponds to 183–207 (RNPVKVNLSTLVCYEDVGNNTSRLR). The chain crosses the membrane as a helical span at residues 208-230 (VVLRILPQTFGFLVPLLIMLFCY). The Cytoplasmic portion of the chain corresponds to 231–250 (GFTLRTLFKAHMGQKHRAMR). A helical membrane pass occupies residues 251–272 (VIFAVVLVFLLCWLPYNLVLFT). Over 273–293 (DTLMRTKLIKETCERRDDIDK) the chain is Extracellular. The chain crosses the membrane as a helical span at residues 294–314 (ALNATEILGFLHSCLNPIIYA). Topologically, residues 315–359 (FIGQKFRHGLLKIMATYGLVSKEFLAKEGRPSFVSSSSANTSTTL) are cytoplasmic.

The protein belongs to the G-protein coupled receptor 1 family. In terms of assembly, interacts with IL8. Interacts with GNAI2. Phosphorylated upon ligand binding; which is required for desensitization.

It is found in the cell membrane. Receptor for interleukin-8 which is a powerful neutrophil chemotactic factor. Binding of IL-8 to the receptor causes activation of neutrophils. This response is mediated via a G-protein that activates a phosphatidylinositol-calcium second messenger system. Binds to IL-8 with high affinity. Also binds with high affinity to CXCL3, GRO/MGSA and NAP-2. In Mus musculus (Mouse), this protein is C-X-C chemokine receptor type 2 (Cxcr2).